The chain runs to 429 residues: Histidine--tRNA ligase (429 aa).

It belongs to the class-II aminoacyl-tRNA synthetase family. As to quaternary structure, homodimer.

It localises to the cytoplasm. It carries out the reaction tRNA(His) + L-histidine + ATP = L-histidyl-tRNA(His) + AMP + diphosphate + H(+). The sequence is that of Histidine--tRNA ligase from Pseudomonas putida (strain GB-1).